Here is a 341-residue protein sequence, read N- to C-terminus: MIKQAIEKVVNHENLTFEESEAVLDEIMNGEAYEVQTASLLTALTAKNPTIDEIAGAAASMRSHALAFPETKDVLEIVGTGGDHANTFNISTTSAIVVAATGTQVAKHGNRAASSKSGAADVLEALGLDINETPAVSYESLQENNLAFLFAQEYHKSMKYVAPVRKQLGFRTIFNILGPLANPAHPTHQLLGVYDETLLEPLANVLKKLGVTNAMVVHGRDGLDEMTTADETAVVELQDDHLTKYTVTPEQFGLKRRQRADLVGGTPEANANITRRILAGDHGPQRDIVLLNAGAALHVAHPDLSIQAGIDLAAKTIDDGKAFEELNRLLAFSDKRKDVVA.

Residues glycine 79, 82-83, threonine 87, 89-92, 107-115, and alanine 119 each bind 5-phospho-alpha-D-ribose 1-diphosphate; these read GD, NIST, and KHGNRAASS. An anthranilate-binding site is contributed by glycine 79. Residue serine 91 participates in Mg(2+) binding. Residue asparagine 110 coordinates anthranilate. Anthranilate is bound at residue arginine 165. 2 residues coordinate Mg(2+): aspartate 224 and glutamate 225.

This sequence belongs to the anthranilate phosphoribosyltransferase family. In terms of assembly, homodimer. Mg(2+) serves as cofactor.

It carries out the reaction N-(5-phospho-beta-D-ribosyl)anthranilate + diphosphate = 5-phospho-alpha-D-ribose 1-diphosphate + anthranilate. The protein operates within amino-acid biosynthesis; L-tryptophan biosynthesis; L-tryptophan from chorismate: step 2/5. Catalyzes the transfer of the phosphoribosyl group of 5-phosphorylribose-1-pyrophosphate (PRPP) to anthranilate to yield N-(5'-phosphoribosyl)-anthranilate (PRA). The sequence is that of Anthranilate phosphoribosyltransferase from Lacticaseibacillus casei (strain BL23) (Lactobacillus casei).